The sequence spans 117 residues: Holo-[acyl-carrier-protein] synthase (117 aa).

Positions 8 and 58 each coordinate Mg(2+).

This sequence belongs to the P-Pant transferase superfamily. AcpS family. Mg(2+) is required as a cofactor.

The protein localises to the cytoplasm. It carries out the reaction apo-[ACP] + CoA = holo-[ACP] + adenosine 3',5'-bisphosphate + H(+). Transfers the 4'-phosphopantetheine moiety from coenzyme A to a Ser of acyl-carrier-protein. This is Holo-[acyl-carrier-protein] synthase from Latilactobacillus sakei subsp. sakei (strain 23K) (Lactobacillus sakei subsp. sakei).